A 718-amino-acid chain; its full sequence is Pentatricopeptide repeat-containing protein At1g22960, mitochondrial (718 aa).

The N-terminal 11 residues, 1–11 (MILCLRLCLRA), are a transit peptide targeting the mitochondrion. PPR repeat units follow at residues 167–201 (ALKL…GFLP), 202–236 (SVRN…GIMP), 237–271 (TVIT…NIEF), 272–306 (SEVT…GFAV), 307–341 (TPYS…GIYP), 342–372 (TTST…MAAP), 373–407 (DVVS…DIHP), 408–442 (SIVT…LIFP), 443–477 (DVIT…GIKP), 478–512 (DGYA…DHHA), 514–548 (DLTI…GLVP), 549–583 (DHVT…RLYP), 584–618 (SVIT…GVRP), 619–653 (NVMT…GIPP), and 654–688 (NKYS…EIEP).

Belongs to the PPR family. P subfamily.

The protein localises to the mitochondrion. The chain is Pentatricopeptide repeat-containing protein At1g22960, mitochondrial from Arabidopsis thaliana (Mouse-ear cress).